The sequence spans 503 residues: Ell-associated factor Eaf (503 aa).

2 stretches are compositionally biased toward polar residues: residues 143 to 158 (PGQQ…TNVA) and 170 to 189 (ENST…SRRN). 2 disordered regions span residues 143-223 (PGQQ…PAWD) and 251-503 (NGSQ…EDDD). Position 199 is a phosphoserine (Ser199). Over residues 251 to 264 (NGSQANTSGSSTGS) the composition is skewed to polar residues. The span at 281 to 296 (GKQRQAPHHGHAKRQQ) shows a compositional bias: basic residues. The span at 297-311 (RSSPPMVQQQPNFGR) shows a compositional bias: polar residues. Positions 312 to 326 (NSYNGGNNYAQQQQH) are enriched in low complexity. Over residues 382–397 (DSSDSDSGSDSDDSTE) the composition is skewed to acidic residues. 2 stretches are compositionally biased toward low complexity: residues 415–435 (MHHQ…QQQH) and 484–497 (NDLL…SSNS).

It belongs to the EAF family.

The protein localises to the nucleus. Promotes transcriptional elongation by Su(Tpl)/ELL. Essential for development. The polypeptide is Ell-associated factor Eaf (Drosophila ananassae (Fruit fly)).